The primary structure comprises 450 residues: Keratin, type I cytoskeletal 25 (450 aa).

Positions 1–24 (MSLRLPSGSRRAGPRPTTGSLRLS) are disordered. Residues 1–78 (MSLRLPSGSR…MNEGGLLSGN (78 aa)) are head. Residues 79–114 (EKVTMQNLNDRLASYLENVRALEEANADLEQKIKGW) are coil 1A. The region spanning 79 to 394 (EKVTMQNLND…LLIGGDDGAC (316 aa)) is the IF rod domain. The segment at 115–136 (YEKFGPGSCRGLDHDYSRYLPI) is linker 1. The segment at 137–228 (IEDLKNQIIA…KNHKEEMQVL (92 aa)) is coil 1B. The tract at residues 229 to 251 (QCAAGGNVNVEMNAAPGVDLTVL) is linker 12. The tract at residues 252–390 (LNNMRAEYEA…ETYCLLIGGD (139 aa)) is coil 2. The segment at 391-450 (DGACKSGGYKSKDYAAGNMGNQMKDPIRAIVVKKVLEEVDQRSKVLTTRLHSLEEKSQSN) is tail. Ser-442 carries the phosphoserine modification.

Belongs to the intermediate filament family. As to quaternary structure, heterodimer of a type I and a type II keratin. Heterodimer with type II keratin KRT5 leading to the formation of keratin intermediate filament (KIF) network. Interacts with KRT6A to form filaments. Expressed in skin and wool follicle. Expression localized to the inner root sheath of wool follicle.

Its subcellular location is the cytoplasm. Its function is as follows. Essential for the proper assembly of type I and type II keratin protein complexes and formation of keratin intermediate filaments in the inner root sheath (irs). Plays a role in the cytoskeleton organization. The polypeptide is Keratin, type I cytoskeletal 25 (Ovis aries (Sheep)).